A 370-amino-acid chain; its full sequence is Developmentally-regulated GTP-binding protein 1 homolog (370 aa).

The OBG-type G domain maps to 65 to 292; sequence ARVGLIGFPS…LLDKIWEYLK (228 aa). GTP-binding positions include 71–78, 117–121, and 250–253; these read GFPSVGKS, DLPGI, and NKID. The TGS domain occupies 292–369; the sequence is KLIRVYTKPK…ADEDIVQIVK (78 aa).

This sequence belongs to the TRAFAC class OBG-HflX-like GTPase superfamily. OBG GTPase family.

This chain is Developmentally-regulated GTP-binding protein 1 homolog (drg1), found in Dictyostelium discoideum (Social amoeba).